Consider the following 647-residue polypeptide: Paraneoplastic antigen Ma6E (647 aa).

Disordered stretches follow at residues 111–199, 227–254, 508–580, and 608–647; these read QPQG…AGGA, GAAGEAGGAGEAGAAGEAGGAGEGRAAG, AAAP…VPWG, and RGQEARKPPLEGLQTILEEPENEDEDGAGDEGQPKSSQGK. Gly residues-rich tracts occupy residues 122 to 149, 158 to 199, and 227 to 251; these read GEGGGAGEAGGVGEVGAAGEAGGTGEAG, GEAG…AGGA, and GAAGEAGGAGEAGAAGEAGGAGEGR. The segment covering 517–570 has biased composition (low complexity); sequence PAAAQASPAQGNASEAGPGAEDAAEAASATKEAARGAPAAGEGESAPAGPEGLG. The span at 625-636 shows a compositional bias: acidic residues; that stretch reads EEPENEDEDGAG.

The polypeptide is Paraneoplastic antigen Ma6E (Homo sapiens (Human)).